We begin with the raw amino-acid sequence, 224 residues long: Probable septum site-determining protein MinC (224 aa).

It belongs to the MinC family. In terms of assembly, interacts with MinD and FtsZ.

Its function is as follows. Cell division inhibitor that blocks the formation of polar Z ring septums. Rapidly oscillates between the poles of the cell to destabilize FtsZ filaments that have formed before they mature into polar Z rings. Prevents FtsZ polymerization. The chain is Probable septum site-determining protein MinC from Shewanella amazonensis (strain ATCC BAA-1098 / SB2B).